A 63-amino-acid polypeptide reads, in one-letter code: Large ribosomal subunit protein bL28 (63 aa).

It belongs to the bacterial ribosomal protein bL28 family.

This Sulfurihydrogenibium sp. (strain YO3AOP1) protein is Large ribosomal subunit protein bL28.